We begin with the raw amino-acid sequence, 156 residues long: Small ribosomal subunit protein uS7 (156 aa).

The protein belongs to the universal ribosomal protein uS7 family. Part of the 30S ribosomal subunit. Contacts proteins S9 and S11.

In terms of biological role, one of the primary rRNA binding proteins, it binds directly to 16S rRNA where it nucleates assembly of the head domain of the 30S subunit. Is located at the subunit interface close to the decoding center, probably blocks exit of the E-site tRNA. In Brucella melitensis biotype 1 (strain ATCC 23456 / CCUG 17765 / NCTC 10094 / 16M), this protein is Small ribosomal subunit protein uS7.